The following is a 418-amino-acid chain: Replication factor C large subunit (418 aa).

Residue 47 to 54 coordinates ATP; it reads GSQGTGKT.

The protein belongs to the activator 1 small subunits family. RfcL subfamily. Heteromultimer composed of small subunits (RfcS) and large subunits (RfcL).

Part of the RFC clamp loader complex which loads the PCNA sliding clamp onto DNA. This chain is Replication factor C large subunit, found in Thermoplasma acidophilum (strain ATCC 25905 / DSM 1728 / JCM 9062 / NBRC 15155 / AMRC-C165).